We begin with the raw amino-acid sequence, 111 residues long: Integration host factor subunit alpha (111 aa).

The protein belongs to the bacterial histone-like protein family. As to quaternary structure, heterodimer of an alpha and a beta chain.

In terms of biological role, this protein is one of the two subunits of integration host factor, a specific DNA-binding protein that functions in genetic recombination as well as in transcriptional and translational control. The polypeptide is Integration host factor subunit alpha (Chelativorans sp. (strain BNC1)).